The sequence spans 265 residues: MLLTIDVGNTHTVLGLFDGEDIVEHWRISTDARRTADELAVLLQGLMGMHPLLGEELGDGIDGIAICSTVPSVLHELREVTRRYYGDVPAVLVEPGIKTGVPILMDNPKEVGADRIINAVAAVELYGGPAIVVDFGTATTFDAVSARGEYAGGVIAPGIEISVEALGVRGAQLRKIELARPRAVIGKNTVEAMQAGIVYGFAGQVDGVVTRMARELADDPDDVTVIATGGLAPMVLGEASVIDEHEPWLTLIGLRLVYERNISRT.

6-13 is a binding site for ATP; sequence DVGNTHTV. A substrate-binding site is contributed by 112–115; that stretch reads GADR. The Proton acceptor role is filled by Asp-114. Asp-134 is a K(+) binding site. Thr-137 contributes to the ATP binding site. Substrate is bound at residue Thr-189.

This sequence belongs to the type III pantothenate kinase family. Homodimer. NH4(+) serves as cofactor. It depends on K(+) as a cofactor.

It is found in the cytoplasm. It carries out the reaction (R)-pantothenate + ATP = (R)-4'-phosphopantothenate + ADP + H(+). It functions in the pathway cofactor biosynthesis; coenzyme A biosynthesis; CoA from (R)-pantothenate: step 1/5. Its function is as follows. Catalyzes the phosphorylation of pantothenate (Pan), the first step in CoA biosynthesis. This Streptomyces avermitilis (strain ATCC 31267 / DSM 46492 / JCM 5070 / NBRC 14893 / NCIMB 12804 / NRRL 8165 / MA-4680) protein is Type III pantothenate kinase.